The primary structure comprises 174 residues: NADH-ubiquinone oxidoreductase chain 6 (174 aa).

5 helical membrane-spanning segments follow: residues 1 to 21, 24 to 44, 47 to 67, 86 to 106, and 151 to 171; these read MTYV…GFSS, SPIY…AIIL, GGGY…MVVF, VEVL…VLWV, and WLVV…IEIA.

It belongs to the complex I subunit 6 family. As to quaternary structure, core subunit of respiratory chain NADH dehydrogenase (Complex I) which is composed of 45 different subunits.

The protein localises to the mitochondrion inner membrane. It carries out the reaction a ubiquinone + NADH + 5 H(+)(in) = a ubiquinol + NAD(+) + 4 H(+)(out). Functionally, core subunit of the mitochondrial membrane respiratory chain NADH dehydrogenase (Complex I) which catalyzes electron transfer from NADH through the respiratory chain, using ubiquinone as an electron acceptor. Essential for the catalytic activity and assembly of complex I. The polypeptide is NADH-ubiquinone oxidoreductase chain 6 (MT-ND6) (Gorilla gorilla gorilla (Western lowland gorilla)).